Here is a 188-residue protein sequence, read N- to C-terminus: dCTP deaminase (188 aa).

Residues 111–116, 135–137, Gln-156, Tyr-170, and Gln-180 each bind dCTP; these read KSTYAR and TLE. Glu-137 acts as the Proton donor/acceptor in catalysis.

The protein belongs to the dCTP deaminase family. As to quaternary structure, homotrimer.

It catalyses the reaction dCTP + H2O + H(+) = dUTP + NH4(+). It functions in the pathway pyrimidine metabolism; dUMP biosynthesis; dUMP from dCTP (dUTP route): step 1/2. Its function is as follows. Catalyzes the deamination of dCTP to dUTP. This is dCTP deaminase from Chromohalobacter salexigens (strain ATCC BAA-138 / DSM 3043 / CIP 106854 / NCIMB 13768 / 1H11).